Reading from the N-terminus, the 409-residue chain is Histidine--tRNA ligase (409 aa).

This sequence belongs to the class-II aminoacyl-tRNA synthetase family.

It is found in the cytoplasm. It catalyses the reaction tRNA(His) + L-histidine + ATP = L-histidyl-tRNA(His) + AMP + diphosphate + H(+). This is Histidine--tRNA ligase from Methanosphaerula palustris (strain ATCC BAA-1556 / DSM 19958 / E1-9c).